The primary structure comprises 104 residues: DET1- and DDB1-associated protein 1 (104 aa).

Residues 67–77 show a composition bias toward basic and acidic residues; the sequence is KKNAAKKREQE. The interval 67-104 is disordered; it reads KKNAAKKREQEQAEGEGGSPAPPRKIARTDSQEMNEDS.

This sequence belongs to the DDA1 family. Component of numerous DCX (DDB1-CUL4-X-box) E3 ubiquitin-protein ligase complexes which consist of a core of DDB1, cullin-4 (CUL4A or CUL4B), DDA1 and RBX1.

It participates in protein modification; protein ubiquitination. Functionally, functions as a component of numerous distinct DCX (DDB1-CUL4-X-box) E3 ubiquitin-protein ligase complexes which mediate the ubiquitination and subsequent proteasomal degradation of target proteins. In the DCX complexes, acts as a scaffolding subunit required to stabilize the complex. The polypeptide is DET1- and DDB1-associated protein 1 (Danio rerio (Zebrafish)).